The primary structure comprises 171 residues: Sec-independent protein translocase protein TatB (171 aa).

The helical transmembrane segment at 1-21 (MFDIGFSELLLVFIIGLVVLG) threads the bilayer. Residues 89-171 (AESMKRSYVA…APSPSSSDKP (83 aa)) form a disordered region. A compositionally biased stretch (basic and acidic residues) spans 100–123 (DPEKASDEAHTIHNPVVKDNETAH). The segment covering 130–139 (AAQTQASSPE) has biased composition (polar residues).

Belongs to the TatB family. In terms of assembly, the Tat system comprises two distinct complexes: a TatABC complex, containing multiple copies of TatA, TatB and TatC subunits, and a separate TatA complex, containing only TatA subunits. Substrates initially bind to the TatABC complex, which probably triggers association of the separate TatA complex to form the active translocon.

The protein localises to the cell inner membrane. Part of the twin-arginine translocation (Tat) system that transports large folded proteins containing a characteristic twin-arginine motif in their signal peptide across membranes. Together with TatC, TatB is part of a receptor directly interacting with Tat signal peptides. TatB may form an oligomeric binding site that transiently accommodates folded Tat precursor proteins before their translocation. The chain is Sec-independent protein translocase protein TatB from Escherichia coli O1:K1 / APEC.